A 391-amino-acid polypeptide reads, in one-letter code: Rhizopuspepsin-2 (391 aa).

The first 21 residues, 1–21 (MKLTLISSCVALAFMALATEA), serve as a signal peptide directing secretion. Positions 22–68 (APSGKKLSIPLTKNTNYKPSAKNAIQKALAKYHRFRTTSSSNSTSTE) are cleaved as a propeptide — activation peptide. A Peptidase A1 domain is found at 84 to 388 (YYGKVTVGTP…NQEVPEVQIA (305 aa)). The active site involves aspartate 102. An intrachain disulfide couples cysteine 115 to cysteine 118. Aspartate 285 is an active-site residue. A disulfide bridge connects residues cysteine 319 and cysteine 352.

It belongs to the peptidase A1 family.

It carries out the reaction Hydrolysis of proteins with broad specificity similar to that of pepsin A, preferring hydrophobic residues at P1 and P1'. Clots milk and activates trypsinogen. Does not cleave 4-Gln-|-His-5, but does cleave 10-His-|-Leu-11 and 12-Val-|-Glu-13 in B chain of insulin.. This is Rhizopuspepsin-2 from Rhizopus niveus.